The sequence spans 461 residues: UDP-glycosyltransferase 82A1 (461 aa).

UDP-alpha-D-glucose is bound by residues Ser292, Ala349 to Gln351, His366 to Glu374, and Ala388 to Gln391.

It belongs to the UDP-glycosyltransferase family.

The sequence is that of UDP-glycosyltransferase 82A1 (UGT82A1) from Arabidopsis thaliana (Mouse-ear cress).